The following is a 72-amino-acid chain: Translational regulator CsrA (72 aa).

Belongs to the CsrA/RsmA family. As to quaternary structure, homodimer; the beta-strands of each monomer intercalate to form a hydrophobic core, while the alpha-helices form wings that extend away from the core.

It is found in the cytoplasm. A translational regulator that binds mRNA to regulate translation initiation and/or mRNA stability. Usually binds in the 5'-UTR at or near the Shine-Dalgarno sequence preventing ribosome-binding, thus repressing translation. Its main target seems to be the major flagellin gene, while its function is anatagonized by FliW. The protein is Translational regulator CsrA of Clostridium botulinum (strain 657 / Type Ba4).